The following is a 276-amino-acid chain: MAERGVERGGDRGDFGRGFGGRGGGRGGPRGRGRRAGRAPEEEKWVPVTKLGRLVKEGKITKIEQIYLHSLPVKEYQIIDLLVGPSLKDEVMKIMPVQKQTRAGQRTRFKAFIVVGDSNGHVGLGVKCSKEVATAIRGAIILAKLSVVPIRRGYWGNKIGKPHTVPCKVTGKCGSVTVRMVPAPRGSGIVAARVPKKVLQFAGIDDVFTSSRGSTKTLGNFVKATFDCLQKTYGFLTPEFWKETRFSKSPYQEHTDFLLIPPGVKISEVVVDKSVE.

The span at 1–15 (MAERGVERGGDRGDF) shows a compositional bias: basic and acidic residues. Residues 1-42 (MAERGVERGGDRGDFGRGFGGRGGGRGGPRGRGRRAGRAPEE) are disordered. The segment covering 16 to 28 (GRGFGGRGGGRGG) has biased composition (gly residues). The S5 DRBM domain maps to 87–150 (LKDEVMKIMP…ILAKLSVVPI (64 aa)).

The protein belongs to the universal ribosomal protein uS5 family.

In Arabidopsis thaliana (Mouse-ear cress), this protein is Small ribosomal subunit protein uS5w (RPS2D).